We begin with the raw amino-acid sequence, 146 residues long: D-aminoacyl-tRNA deacylase (146 aa).

The short motif at 138 to 139 (GP) is the Gly-cisPro motif, important for rejection of L-amino acids element.

Belongs to the DTD family. Homodimer.

It localises to the cytoplasm. It carries out the reaction glycyl-tRNA(Ala) + H2O = tRNA(Ala) + glycine + H(+). The enzyme catalyses a D-aminoacyl-tRNA + H2O = a tRNA + a D-alpha-amino acid + H(+). Its function is as follows. An aminoacyl-tRNA editing enzyme that deacylates mischarged D-aminoacyl-tRNAs. Also deacylates mischarged glycyl-tRNA(Ala), protecting cells against glycine mischarging by AlaRS. Acts via tRNA-based rather than protein-based catalysis; rejects L-amino acids rather than detecting D-amino acids in the active site. By recycling D-aminoacyl-tRNA to D-amino acids and free tRNA molecules, this enzyme counteracts the toxicity associated with the formation of D-aminoacyl-tRNA entities in vivo and helps enforce protein L-homochirality. This Xanthomonas euvesicatoria pv. vesicatoria (strain 85-10) (Xanthomonas campestris pv. vesicatoria) protein is D-aminoacyl-tRNA deacylase.